Here is a 224-residue protein sequence, read N- to C-terminus: DNA repair and recombination protein RadB (224 aa).

This sequence belongs to the eukaryotic RecA-like protein family. RadB subfamily.

Its function is as follows. Involved in DNA repair and in homologous recombination. May regulate the cleavage reactions of the branch-structured DNA. Has a very weak ATPase activity that is not stimulated by DNA. Binds DNA but does not promote DNA strands exchange. The protein is DNA repair and recombination protein RadB of Thermococcus onnurineus (strain NA1).